Consider the following 373-residue polypeptide: Chaperone protein DnaJ (373 aa).

Residues 5-70 (DYYEVLGLQK…EKKSNYDQFG (66 aa)) enclose the J domain. Residues 132-214 (GVEKEITVNR…CRGNGNVRKT (83 aa)) form a CR-type zinc finger. Zn(2+) is bound by residues C145, C148, C162, C165, C188, C191, C202, and C205. 4 CXXCXGXG motif repeats span residues 145 to 152 (CEHCNGSG), 162 to 169 (CPTCSGTG), 188 to 195 (CDRCSGTG), and 202 to 209 (CTHCRGNG).

It belongs to the DnaJ family. Homodimer. It depends on Zn(2+) as a cofactor.

Its subcellular location is the cytoplasm. Functionally, participates actively in the response to hyperosmotic and heat shock by preventing the aggregation of stress-denatured proteins and by disaggregating proteins, also in an autonomous, DnaK-independent fashion. Unfolded proteins bind initially to DnaJ; upon interaction with the DnaJ-bound protein, DnaK hydrolyzes its bound ATP, resulting in the formation of a stable complex. GrpE releases ADP from DnaK; ATP binding to DnaK triggers the release of the substrate protein, thus completing the reaction cycle. Several rounds of ATP-dependent interactions between DnaJ, DnaK and GrpE are required for fully efficient folding. Also involved, together with DnaK and GrpE, in the DNA replication of plasmids through activation of initiation proteins. This is Chaperone protein DnaJ from Clostridium botulinum (strain Alaska E43 / Type E3).